The following is a 288-amino-acid chain: UPF0276 protein VP3015 (288 aa).

The protein belongs to the UPF0276 family.

The chain is UPF0276 protein VP3015 from Vibrio parahaemolyticus serotype O3:K6 (strain RIMD 2210633).